Consider the following 260-residue polypeptide: Flap endonuclease Xni (260 aa).

D109 is a Mg(2+) binding site. Residues 165 to 259 form the 5'-3' exonuclease domain; that stretch reads VKPSQLADYW…DIRFTGPNKA (95 aa). The K(+) site is built by L176, P185, V187, and I190. Residues 189–194 are interaction with DNA; the sequence is GIGPKA.

It belongs to the Xni family. Mg(2+) is required as a cofactor. Requires K(+) as cofactor.

Functionally, has flap endonuclease activity. During DNA replication, flap endonucleases cleave the 5'-overhanging flap structure that is generated by displacement synthesis when DNA polymerase encounters the 5'-end of a downstream Okazaki fragment. The sequence is that of Flap endonuclease Xni from Vibrio parahaemolyticus serotype O3:K6 (strain RIMD 2210633).